The following is a 233-amino-acid chain: Zinc import ATP-binding protein ZnuC (233 aa).

In terms of domain architecture, ABC transporter spans 6–222 (IEFHNVSKKF…SDFSNALSSL (217 aa)). 38 to 45 (GPNGAGKT) provides a ligand contact to ATP.

It belongs to the ABC transporter superfamily. Zinc importer (TC 3.A.1.15.5) family. In terms of assembly, the complex is composed of two ATP-binding proteins (ZnuC), two transmembrane proteins (ZnuB) and a solute-binding protein (ZnuA).

It is found in the cell inner membrane. It catalyses the reaction Zn(2+)(out) + ATP(in) + H2O(in) = Zn(2+)(in) + ADP(in) + phosphate(in) + H(+)(in). Its function is as follows. Part of the ABC transporter complex ZnuABC involved in zinc import. Responsible for energy coupling to the transport system. This chain is Zinc import ATP-binding protein ZnuC, found in Rickettsia bellii (strain RML369-C).